The sequence spans 63 residues: Large ribosomal subunit protein uL29 (63 aa).

This sequence belongs to the universal ribosomal protein uL29 family.

This Yersinia enterocolitica serotype O:8 / biotype 1B (strain NCTC 13174 / 8081) protein is Large ribosomal subunit protein uL29.